Consider the following 375-residue polypeptide: Probable RNA 3'-terminal phosphate cyclase-like protein (375 aa).

Belongs to the RNA 3'-terminal cyclase family. Type 2 subfamily.

The protein localises to the nucleus. It is found in the nucleolus. In terms of biological role, does not have cyclase activity. Plays a role in 40S-ribosomal-subunit biogenesis in the early pre-rRNA processing steps at sites A0, A1 and A2 that are required for proper maturation of the 18S RNA. The protein is Probable RNA 3'-terminal phosphate cyclase-like protein of Arabidopsis thaliana (Mouse-ear cress).